We begin with the raw amino-acid sequence, 59 residues long: Conotoxin Ts-03 (59 aa).

Residues 1–19 (MRCLPVFIILLLLIPSAAS) form the signal peptide. A propeptide spanning residues 20–47 (VAQPKTKDDVALASFYDNAKRTLQRHWA) is cleaved from the precursor.

This sequence belongs to the conotoxin T superfamily. In terms of processing, contains 2 disulfide bonds that can be either 'C1-C3, C2-C4' or 'C1-C4, C2-C3', since these disulfide connectivities have been observed for conotoxins with cysteine framework V (for examples, see AC P0DQQ7 and AC P81755). As to expression, expressed by the venom duct.

Its subcellular location is the secreted. The sequence is that of Conotoxin Ts-03 from Conus tessulatus (Tessellate cone).